A 137-amino-acid polypeptide reads, in one-letter code: Small heat shock protein IbpA (137 aa).

The sHSP domain occupies 28 to 137 (NQSNGGYPPY…SLKPRRIEIK (110 aa)).

The protein belongs to the small heat shock protein (HSP20) family. In terms of assembly, monomer. Forms homomultimers of about 100-150 subunits at optimal growth temperatures. Conformation changes to monomers at high temperatures or high ionic concentrations.

The protein localises to the cytoplasm. In terms of biological role, associates with aggregated proteins, together with IbpB, to stabilize and protect them from irreversible denaturation and extensive proteolysis during heat shock and oxidative stress. Aggregated proteins bound to the IbpAB complex are more efficiently refolded and reactivated by the ATP-dependent chaperone systems ClpB and DnaK/DnaJ/GrpE. Its activity is ATP-independent. This Yersinia pseudotuberculosis serotype O:1b (strain IP 31758) protein is Small heat shock protein IbpA.